The following is a 155-amino-acid chain: Ribonuclease H (155 aa).

An RNase H type-1 domain is found at 4 to 145 (TEPTVYAYTD…ADRLANRGID (142 aa)). Residues D13, E51, D73, and D137 each coordinate Mg(2+).

It belongs to the RNase H family. In terms of assembly, monomer. Requires Mg(2+) as cofactor.

The protein localises to the cytoplasm. The enzyme catalyses Endonucleolytic cleavage to 5'-phosphomonoester.. Endonuclease that specifically degrades the RNA of RNA-DNA hybrids. The sequence is that of Ribonuclease H from Methylococcus capsulatus (strain ATCC 33009 / NCIMB 11132 / Bath).